A 291-amino-acid chain; its full sequence is Phosphoribulokinase (291 aa).

ATP is bound at residue glycine 12–serine 20.

Belongs to the phosphoribulokinase family. As to quaternary structure, homooctamer.

The enzyme catalyses D-ribulose 5-phosphate + ATP = D-ribulose 1,5-bisphosphate + ADP + H(+). Its pathway is carbohydrate biosynthesis; Calvin cycle. The chain is Phosphoribulokinase (cbbP) from Xanthobacter flavus.